The following is a 348-amino-acid chain: Succinylglutamate desuccinylase (348 aa).

The Zn(2+) site is built by histidine 67, glutamate 70, and histidine 164. Glutamate 228 is a catalytic residue.

It belongs to the AspA/AstE family. Succinylglutamate desuccinylase subfamily. The cofactor is Zn(2+).

The enzyme catalyses N-succinyl-L-glutamate + H2O = L-glutamate + succinate. Its pathway is amino-acid degradation; L-arginine degradation via AST pathway; L-glutamate and succinate from L-arginine: step 5/5. Functionally, transforms N(2)-succinylglutamate into succinate and glutamate. In Shewanella denitrificans (strain OS217 / ATCC BAA-1090 / DSM 15013), this protein is Succinylglutamate desuccinylase.